The following is a 414-amino-acid chain: Tryptophan synthase beta chain (414 aa).

Residues 1–26 are disordered; sequence MVSTFSRKNQNYKKDDLNQPSKDGRF. Basic and acidic residues predominate over residues 12-26; the sequence is YKKDDLNQPSKDGRF. Lys-109 bears the N6-(pyridoxal phosphate)lysine mark.

It belongs to the TrpB family. As to quaternary structure, tetramer of two alpha and two beta chains. Pyridoxal 5'-phosphate is required as a cofactor.

The enzyme catalyses (1S,2R)-1-C-(indol-3-yl)glycerol 3-phosphate + L-serine = D-glyceraldehyde 3-phosphate + L-tryptophan + H2O. Its pathway is amino-acid biosynthesis; L-tryptophan biosynthesis; L-tryptophan from chorismate: step 5/5. Functionally, the beta subunit is responsible for the synthesis of L-tryptophan from indole and L-serine. The protein is Tryptophan synthase beta chain of Prochlorococcus marinus (strain MIT 9215).